A 72-amino-acid polypeptide reads, in one-letter code: Translation initiation factor IF-1 (72 aa).

One can recognise an S1-like domain in the interval 1–72 (MSKEGKITLK…TRGRIIYRIS (72 aa)).

Belongs to the IF-1 family. In terms of assembly, component of the 30S ribosomal translation pre-initiation complex which assembles on the 30S ribosome in the order IF-2 and IF-3, IF-1 and N-formylmethionyl-tRNA(fMet); mRNA recruitment can occur at any time during PIC assembly.

It is found in the cytoplasm. In terms of biological role, one of the essential components for the initiation of protein synthesis. Stabilizes the binding of IF-2 and IF-3 on the 30S subunit to which N-formylmethionyl-tRNA(fMet) subsequently binds. Helps modulate mRNA selection, yielding the 30S pre-initiation complex (PIC). Upon addition of the 50S ribosomal subunit IF-1, IF-2 and IF-3 are released leaving the mature 70S translation initiation complex. This Malacoplasma penetrans (strain HF-2) (Mycoplasma penetrans) protein is Translation initiation factor IF-1.